Reading from the N-terminus, the 475-residue chain is tRNA-dihydrouridine(16/17) synthase [NAD(P)(+)]-like (475 aa).

Residues Pro-23–Val-25 and Gln-79 contribute to the FMN site. The Proton donor role is filled by Cys-108. FMN-binding positions include Lys-147, His-175, Asn-208–Asn-210, and Ala-232–Glu-233. Residues Gly-343–Pro-388 form a disordered region. Basic residues predominate over residues Asn-373–His-383.

The protein belongs to the Dus family. Dus1 subfamily. It depends on FMN as a cofactor.

It is found in the cytoplasm. The protein resides in the nucleus. The enzyme catalyses 5,6-dihydrouridine(16) in tRNA + NADP(+) = uridine(16) in tRNA + NADPH + H(+). It catalyses the reaction 5,6-dihydrouridine(16) in tRNA + NAD(+) = uridine(16) in tRNA + NADH + H(+). The catalysed reaction is 5,6-dihydrouridine(17) in tRNA + NAD(+) = uridine(17) in tRNA + NADH + H(+). It carries out the reaction 5,6-dihydrouridine(17) in tRNA + NADP(+) = uridine(17) in tRNA + NADPH + H(+). Its function is as follows. Catalyzes the synthesis of dihydrouridine, a modified base found in the D-loop of most tRNAs. Specifically modifies U16 and U17 in cytoplasmic tRNAs. Affects the level of some mature tRNA and thereby the total cellular translation. This Mus musculus (Mouse) protein is tRNA-dihydrouridine(16/17) synthase [NAD(P)(+)]-like (Dus1l).